We begin with the raw amino-acid sequence, 103 residues long: Large ribosomal subunit protein bL21 (103 aa).

It belongs to the bacterial ribosomal protein bL21 family. Part of the 50S ribosomal subunit. Contacts protein L20.

Functionally, this protein binds to 23S rRNA in the presence of protein L20. In Aeromonas hydrophila subsp. hydrophila (strain ATCC 7966 / DSM 30187 / BCRC 13018 / CCUG 14551 / JCM 1027 / KCTC 2358 / NCIMB 9240 / NCTC 8049), this protein is Large ribosomal subunit protein bL21.